Reading from the N-terminus, the 202-residue chain is LexA repressor (202 aa).

Positions 28–48 form a DNA-binding region, H-T-H motif; it reads RAEIAQRLGFRSPNAAEEHLK. Catalysis depends on for autocatalytic cleavage activity residues Ser-119 and Lys-156.

Belongs to the peptidase S24 family. As to quaternary structure, homodimer.

The catalysed reaction is Hydrolysis of Ala-|-Gly bond in repressor LexA.. In terms of biological role, represses a number of genes involved in the response to DNA damage (SOS response), including recA and lexA. Binds to the 16 bp palindromic sequence 5'-CTGTATATATATACAG-3'. In the presence of single-stranded DNA, RecA interacts with LexA causing an autocatalytic cleavage which disrupts the DNA-binding part of LexA, leading to derepression of the SOS regulon and eventually DNA repair. This is LexA repressor from Edwardsiella ictaluri (strain 93-146).